The primary structure comprises 3122 residues: Large tegument protein deneddylase (3122 aa).

The deubiquitination activity stretch occupies residues 1-248; sequence MIPAALPHPT…SETYLQDEPF (248 aa). The 219-residue stretch at 20–238 folds into the Peptidase C76 domain; it reads VVTGVRNQFA…TAAALHLYGA (219 aa). Active-site residues include Cys-40, Asp-172, and His-174. Disordered stretches follow at residues 281–367 and 387–496; these read GSGP…GDAA and RARY…PPGA. Over residues 343–353 the composition is skewed to low complexity; it reads SAPDAAASGPP. 2 stretches are compositionally biased toward basic residues: residues 387 to 400 and 425 to 436; these read RARYSTGLPKRRRP and KAKKKSAPKKKA. Positions 437–454 are enriched in low complexity; sequence PVAAEVPASSPTPIAATV. The interaction with inner tegument protein stretch occupies residues 548–578; it reads LELCVIFFFERVLAFLIENGARTHTQAGVAG. Disordered stretches follow at residues 2494-2539, 2570-2974, and 3006-3059; these read YQRP…ADPG, ASDD…THLP, and SDDE…SQFG. 2 stretches are compositionally biased toward pro residues: residues 2578–2590 and 2637–2654; these read TPNPAPALLPPPA and PSPPTPSPPADAALPPPA. A compositionally biased stretch (low complexity) spans 2655-2667; the sequence is FSGSAAAFSAAVP. Basic residues predominate over residues 2668-2681; the sequence is RVRRSRRTRAKSRA. 2 stretches are compositionally biased toward pro residues: residues 2690-2700 and 2710-2719; these read GWRPPALPAPV and PDQPPTPESA. The span at 2734–2743 shows a compositional bias: low complexity; it reads ASARGAFPAP. Composition is skewed to pro residues over residues 2744-2753 and 2775-2785; these read TLAPIPPPPA and SPTPPRGPAAG. 2 stretches are compositionally biased toward low complexity: residues 2786–2807 and 2814–2825; these read PPRRLTRPAVASLSASLNSLPS and HAAAVSAAAAAV. Residues 2841–2852 show a composition bias toward pro residues; sequence SPPPLAPGPVAP. A compositionally biased stretch (low complexity) spans 2853–2867; the sequence is SEPLCGWVVPGGPVA. 11 repeat units span residues 2891 to 2895, 2896 to 2900, 2901 to 2905, 2906 to 2910, 2911 to 2915, 2916 to 2920, 2921 to 2925, 2926 to 2930, 2931 to 2935, 2936 to 2940, and 2941 to 2945. The 11 X 5 AA tandem repeats of P-Q-P-P-L stretch occupies residues 2891–2945; the sequence is PQPPLPQPPLPQPPLPQPPLPQPPLPQPPLPQPPLPQPPLPQPPLPQPPLPQPPL. The segment covering 2891 to 2947 has biased composition (pro residues); it reads PQPPLPQPPLPQPPLPQPPLPQPPLPQPPLPQPPLPQPPLPQPPLPQPPLPQPPLPP. Composition is skewed to polar residues over residues 2950-2959 and 2965-2974; these read RTLTPQSRDS and SPTHTNTHLP. Residues 3006–3020 are compositionally biased toward basic and acidic residues; the sequence is SDDEHSDADSLRFSD. Over residues 3029–3045 the composition is skewed to pro residues; it reads PLPPEPHLPPADEPPGP.

It belongs to the herpesviridae large tegument protein family. Interacts with host CUL1 and CUL4A; these interactions inhibit the E3 ligase activity of cullins. Interacts with inner tegument protein. Interacts with capsid vertex specific component CVC2. Interacts with the major capsid protein/MCP. In terms of processing, proteolytically processed, possibly into several polypeptides. Enzymatic activity is only detectable following cleavage of the UL36 protein, which occurs late during viral replication.

The protein resides in the virion tegument. It localises to the host cytoplasm. The protein localises to the host nucleus. It catalyses the reaction Thiol-dependent hydrolysis of ester, thioester, amide, peptide and isopeptide bonds formed by the C-terminal Gly of ubiquitin (a 76-residue protein attached to proteins as an intracellular targeting signal).. Large tegument protein that plays multiple roles in the viral cycle. During viral entry, remains associated with the capsid while most of the tegument is detached and participates in the capsid transport toward the host nucleus. Plays a role in the routing of the capsid at the nuclear pore complex and subsequent uncoating. Within the host nucleus, acts as a deneddylase and promotes the degradation of nuclear CRLs (cullin-RING ubiquitin ligases) and thereby stabilizes nuclear CRL substrates, while cytoplasmic CRLs remain unaffected. These modifications prevent host cell cycle S-phase progression and create a favorable environment allowing efficient viral genome replication. Participates later in the secondary envelopment of capsids. Indeed, plays a linker role for the association of the outer viral tegument to the capsids together with the inner tegument protein. This is Large tegument protein deneddylase from Human herpesvirus 2 (strain HG52) (HHV-2).